The chain runs to 805 residues: Phenylalanine--tRNA ligase beta subunit (805 aa).

Residues 39-155 (VKVLGAFRIC…EDAPMGMRFI (117 aa)) enclose the tRNA-binding domain. In terms of domain architecture, B5 spans 408 to 479 (DTSRAYRFDP…RVASLTKLQG (72 aa)). 4 residues coordinate Mg(2+): Asp457, Asp463, Glu466, and Glu467. The 98-residue stretch at 707–804 (SDLQAVERDF…VAKATGATLR (98 aa)) folds into the FDX-ACB domain.

The protein belongs to the phenylalanyl-tRNA synthetase beta subunit family. Type 1 subfamily. As to quaternary structure, tetramer of two alpha and two beta subunits. The cofactor is Mg(2+).

The protein localises to the cytoplasm. It carries out the reaction tRNA(Phe) + L-phenylalanine + ATP = L-phenylalanyl-tRNA(Phe) + AMP + diphosphate + H(+). The polypeptide is Phenylalanine--tRNA ligase beta subunit (Cereibacter sphaeroides (strain ATCC 17023 / DSM 158 / JCM 6121 / CCUG 31486 / LMG 2827 / NBRC 12203 / NCIMB 8253 / ATH 2.4.1.) (Rhodobacter sphaeroides)).